The sequence spans 144 residues: Transcription antitermination protein NusB (144 aa).

The protein belongs to the NusB family.

In terms of biological role, involved in transcription antitermination. Required for transcription of ribosomal RNA (rRNA) genes. Binds specifically to the boxA antiterminator sequence of the ribosomal RNA (rrn) operons. This chain is Transcription antitermination protein NusB, found in Haemophilus influenzae (strain 86-028NP).